The primary structure comprises 194 residues: MHILTAGVDEAGRGPLVGSVFAAAVILPETFDLPGLTDSKKLSEKKRDALAEMIKEQAAAWYVAAATPEEIASLNILHATMLAMKRAVDGLAVRPEKIFIDGNRIPEHLDIPAEAVVKGDSKIIEISAASVLAKTARDAEMYALAQRHPQYGFDKHKGYGTKQHLEALKQYGVLPEHRRDFAPVRNLLAQQTLF.

Residues 3 to 193 (ILTAGVDEAG…VRNLLAQQTL (191 aa)) form the RNase H type-2 domain. Positions 9, 10, and 101 each coordinate a divalent metal cation.

Belongs to the RNase HII family. The cofactor is Mn(2+). Mg(2+) serves as cofactor.

It is found in the cytoplasm. The enzyme catalyses Endonucleolytic cleavage to 5'-phosphomonoester.. Endonuclease that specifically degrades the RNA of RNA-DNA hybrids. The polypeptide is Ribonuclease HII (Neisseria meningitidis serogroup C (strain 053442)).